Here is a 179-residue protein sequence, read N- to C-terminus: Bifunctional protein PyrR (179 aa).

The short motif at 97-109 (VILIDDVLFTGRT) is the PRPP-binding element.

Belongs to the purine/pyrimidine phosphoribosyltransferase family. PyrR subfamily.

It carries out the reaction UMP + diphosphate = 5-phospho-alpha-D-ribose 1-diphosphate + uracil. Its function is as follows. Regulates the transcription of the pyrimidine nucleotide (pyr) operon in response to exogenous pyrimidines. In terms of biological role, also displays a weak uracil phosphoribosyltransferase activity which is not physiologically significant. The polypeptide is Bifunctional protein PyrR (Actinobacillus pleuropneumoniae serotype 5b (strain L20)).